Reading from the N-terminus, the 243-residue chain is Auxin-induced protein AUX28 (243 aa).

The EAR-like (transcriptional repression) motif lies at 8-12 (LRLGL). The tract at residues 54–91 (AATTAAAAADPTDKHKTLPKEKTLLPADPAKPPAKTQV) is disordered. Basic and acidic residues predominate over residues 64 to 76 (PTDKHKTLPKEKT). Over residues 77 to 89 (LLPADPAKPPAKT) the composition is skewed to low complexity. Positions 123–223 (ASFVKVSMDG…SCKRLRIMKG (101 aa)) constitute a PB1 domain.

It belongs to the Aux/IAA family. Homodimers and heterodimers.

It is found in the nucleus. Its function is as follows. Aux/IAA proteins are short-lived transcriptional factors that function as repressors of early auxin response genes at low auxin concentrations. Repression is thought to result from the interaction with auxin response factors (ARFs), proteins that bind to the auxin-responsive promoter element (AuxRE). Formation of heterodimers with ARF proteins may alter their ability to modulate early auxin response genes expression. This Glycine max (Soybean) protein is Auxin-induced protein AUX28 (AUX28).